Consider the following 90-residue polypeptide: Beta-microseminoprotein (90 aa).

5 cysteine pairs are disulfide-bonded: Cys-2–Cys-16, Cys-34–Cys-70, Cys-37–Cys-46, Cys-39–Cys-47, and Cys-61–Cys-84. The residue at position 90 (Val-90) is a Valine amide.

It belongs to the beta-microseminoprotein family.

Its subcellular location is the secreted. This chain is Beta-microseminoprotein (MSMB), found in Struthio camelus (Common ostrich).